The following is a 523-amino-acid chain: Mitochondrial distribution and morphology protein 12 (523 aa).

The SMP-LTD domain occupies 1–483; that stretch reads MSFDINWEKL…WPSWICVDMA (483 aa). The segment covering 108-117 has biased composition (basic and acidic residues); sequence HEADIINDHD. 4 disordered regions span residues 108–160, 178–213, 270–313, and 483–523; these read HEAD…QYDE, SAST…PFQS, KTKE…NAKN, and AEND…KKED. Acidic residues-rich tracts occupy residues 118-140 and 148-158; these read YGDE…DDEN and EDEENEESSQY. Composition is skewed to polar residues over residues 178–187 and 277–288; these read SASTPKRTSP and SGDQQQGKQTGK. Residues 289 to 313 show a composition bias toward basic and acidic residues; it reads ANEKGQKHKHEHEEEQGSDKQNAKN. The span at 483–501 shows a compositional bias: acidic residues; the sequence is AENDDEEEDDDDDDHDEDN. Over residues 502-523 the composition is skewed to basic and acidic residues; that stretch reads EGRGRMRDTGDVDVRDHDKKED.

The protein belongs to the MDM12 family. In terms of assembly, component of the ER-mitochondria encounter structure (ERMES) or MDM complex, composed of MMM1, MDM10, MDM12 and MDM34. An MMM1 homodimer associates with one molecule of MDM12 on each side in a pairwise head-to-tail manner, and the SMP-LTD domains of MMM1 and MDM12 generate a continuous hydrophobic tunnel for phospholipid trafficking.

It is found in the mitochondrion outer membrane. It localises to the endoplasmic reticulum membrane. In terms of biological role, component of the ERMES/MDM complex, which serves as a molecular tether to connect the endoplasmic reticulum (ER) and mitochondria. Components of this complex are involved in the control of mitochondrial shape and protein biogenesis, and function in nonvesicular lipid trafficking between the ER and mitochondria. MDM12 is required for the interaction of the ER-resident membrane protein MMM1 and the outer mitochondrial membrane-resident beta-barrel protein MDM10. The MDM12-MMM1 subcomplex functions in the major beta-barrel assembly pathway that is responsible for biogenesis of all mitochondrial outer membrane beta-barrel proteins, and acts in a late step after the SAM complex. The MDM10-MDM12-MMM1 subcomplex further acts in the TOM40-specific pathway after the action of the MDM12-MMM1 complex. Essential for establishing and maintaining the structure of mitochondria and maintenance of mtDNA nucleoids. This Lodderomyces elongisporus (strain ATCC 11503 / CBS 2605 / JCM 1781 / NBRC 1676 / NRRL YB-4239) (Yeast) protein is Mitochondrial distribution and morphology protein 12.